The chain runs to 121 residues: Putative iron-sulfur cluster insertion protein ErpA (121 aa).

Iron-sulfur cluster is bound by residues Cys-49, Cys-113, and Cys-115.

The protein belongs to the HesB/IscA family. Homodimer. Iron-sulfur cluster serves as cofactor.

In terms of biological role, required for insertion of 4Fe-4S clusters. The polypeptide is Putative iron-sulfur cluster insertion protein ErpA (Verminephrobacter eiseniae (strain EF01-2)).